A 3948-amino-acid polypeptide reads, in one-letter code: Equisetin synthetase eqxS (3948 aa).

Residues 4-438 (SEPIAVIGSA…GTNAHAIIEA (435 aa)) enclose the Ketosynthase family 3 (KS3) domain. Active-site for beta-ketoacyl synthase activity residues include Cys-177, His-316, and His-358. A malonyl-CoA:ACP transacylase (MAT) domain region spans residues 543 to 847 (IFTGQGTQWP…DTIEAISEGR (305 aa)). An N-terminal hotdog fold region spans residues 931-1066 (HPLLGRRCHD…AQIKASLGAP (136 aa)). Residues 931-1233 (HPLLGRRCHD…MELVPFSPAT (303 aa)) are dehydratase (DH) domain. One can recognise a PKS/mFAS DH domain in the interval 931–1235 (HPLLGRRCHD…LVPFSPATPA (305 aa)). The Proton acceptor; for dehydratase activity role is filled by His-964. The C-terminal hotdog fold stretch occupies residues 1081-1235 (LRPVSVDRFY…LVPFSPATPA (155 aa)). The active-site Proton donor; for dehydratase activity is Asp-1141. The methyltransferase (MT) domain stretch occupies residues 1376–1574 (MLQDVYEQGF…GIDTTTPPVH (199 aa)). Positions 2105–2277 (TFLLVGLTGE…VAASSIDISS (173 aa)) are ketoreductase (KR) domain. The Carrier 1 domain maps to 2389–2464 (AIIKESFIVR…DLVDECLDLL (76 aa)). O-(pantetheine 4'-phosphoryl)serine is present on Ser-2424. The tract at residues 2480–2553 (QAAKPTTVIP…NSTDILAPPR (74 aa)) is disordered. 2 stretches are compositionally biased toward polar residues: residues 2487–2505 (VIPQ…QGTS) and 2513–2528 (GSDS…LTSW). The span at 2529-2541 (DRQDSSPPDKSDD) shows a compositional bias: basic and acidic residues. A condensation (C) domain region spans residues 2564–2991 (SYGQAGFWFL…IRGSDKTVDA (428 aa)). Residues 3026-3424 (QVIQDNPDNI…DGLLFCDGRL (399 aa)) form an adenylation (A) (KR) domain region. The Carrier 2 domain occupies 3540–3617 (EILTPSEQRL…AMAGVLEDCG (78 aa)). Ser-3577 carries the post-translational modification O-(pantetheine 4'-phosphoryl)serine. The interval 3653–3870 (LTGSSGYLGR…MPVNEVVEAI (218 aa)) is reductase (RED) domain.

The protein in the C-terminal section; belongs to the NRP synthetase family.

The enzyme catalyses L-serine + 7 malonyl-CoA + acetyl-CoA + 2 S-adenosyl-L-methionine + ATP + 8 NADPH + 11 H(+) = (5S)-3-[(2E,6R,8E,10E,12E)-2,6-dimethyltetradeca-2,8,10,12-tetraenoyl]-5-(hydroxymethyl)pyrrolidine-2,4-dione + AMP + 2 S-adenosyl-L-homocysteine + 7 CO2 + diphosphate + 8 NADP(+) + 8 CoA + 6 H2O. It functions in the pathway mycotoxin biosynthesis. In terms of biological role, hybrid PKS-NRPS synthetase; part of the gene cluster that mediates the biosynthesis of equisetin, a trans-fused decalin-containing tetramic acid with antimicrobial activity. The PKS module of eqxS together with the enoylreductase eqxC catalyze the formation of the polyketide unit which is then conjugated to L-serine by the condensation domain of the eqxS NRPS module. Activity of the Dieckmann cyclase domain (RED) results in release of the Dieckmann product intermediate. Diels-Alderase eqx3 is involved in endo-selective Diels-Alder cycloaddition to form the decalin ring, leading to the production of N-desmethylequisetin also called trichosetin. Subsequent N-methylation is carried out by eqxD to give equisetin. This is Equisetin synthetase eqxS from Fusarium heterosporum.